Reading from the N-terminus, the 284-residue chain is Nucleotide-binding protein in ptsO 5'region (284 aa).

ATP is bound at residue 8-15 (GRSGSGKS). Residue 60–63 (DARN) coordinates GTP.

This sequence belongs to the RapZ-like family.

Displays ATPase and GTPase activities. This is Nucleotide-binding protein in ptsO 5'region from Pseudomonas putida (Arthrobacter siderocapsulatus).